The following is a 644-amino-acid chain: Sentrin-specific protease 1 (644 aa).

The interaction with CCAR2 stretch occupies residues 1-200; the sequence is MDDIADRMRM…REIYRQLLQM (200 aa). 4 positions are modified to phosphoserine: Ser-57, Ser-117, Ser-132, and Ser-157. The segment at 92–117 is disordered; that stretch reads QSANGQWRNSTPSSSSSLQKSRNSRS. The segment covering 99 to 117 has biased composition (low complexity); that stretch reads RNSTPSSSSSLQKSRNSRS. Disordered stretches follow at residues 156–184 and 283–312; these read PSPSWSGSCRRSLLSPKKTQRRHVSTAEE and SKDSGTLHHPHHHHSVPHQPDNLAASNTQS. Positions 171-177 match the Nuclear localization signal motif; it reads PKKTQRR. Positions 450-613 are protease; sequence LTITRKDIQT…GMFACKYADC (164 aa). Catalysis depends on residues His-533 and Asp-550. The Nuclear localization signal motif lies at 574–577; sequence KKRK. The Nucleophile role is filled by Cys-603. The short motif at 628-634 is the Nuclear localization signal element; the sequence is PYFRKRM. The short motif at 635–644 is the Nuclear export signal element; it reads VWEILHRKLL.

It belongs to the peptidase C48 family. As to quaternary structure, interacts with RBM33; promoting ALKBH5 desumoylation and subsequent activation. In terms of tissue distribution, highly expressed in testis. Expressed at lower levels in thymus, pancreas, spleen, liver, ovary and small intestine.

The protein localises to the nucleus. The protein resides in the cytoplasm. Its function is as follows. Protease that catalyzes two essential functions in the SUMO pathway. The first is the hydrolysis of an alpha-linked peptide bond at the C-terminal end of the small ubiquitin-like modifier (SUMO) propeptides, SUMO1, SUMO2 and SUMO3 leading to the mature form of the proteins. The second is the deconjugation of SUMO1, SUMO2 and SUMO3 from targeted proteins, by cleaving an epsilon-linked peptide bond between the C-terminal glycine of the mature SUMO and the lysine epsilon-amino group of the target protein. Deconjugates SUMO1 from HIPK2. Deconjugates SUMO1 from HDAC1 and BHLHE40/DEC1, which decreases its transcriptional repression activity. Deconjugates SUMO1 from CLOCK, which decreases its transcriptional activation activity. Deconjugates SUMO2 from MTA1. Inhibits N(6)-methyladenosine (m6A) RNA methylation by mediating SUMO1 deconjugation from METTL3 and ALKBH5: METTL3 inhibits the m6A RNA methyltransferase activity, while ALKBH5 desumoylation promotes m6A demethylation. Desumoylates CCAR2 which decreases its interaction with SIRT1. Deconjugates SUMO1 from GPS2. In Homo sapiens (Human), this protein is Sentrin-specific protease 1 (SENP1).